Reading from the N-terminus, the 443-residue chain is Trimethylamine monooxygenase (443 aa).

4 residues coordinate FAD: D37, Q39, L45, and W46. NADP(+)-binding residues include W70 and N72. Positions 72 and 125 each coordinate FAD. Y170, S202, S203, S205, and R226 together coordinate NADP(+). FAD contacts are provided by Q315 and T318. R409 contributes to the NADP(+) binding site.

This sequence belongs to the FMO family. Requires FAD as cofactor.

It carries out the reaction trimethylamine + NADPH + O2 = trimethylamine N-oxide + NADP(+) + H2O. Its function is as follows. Catalyzes the oxidation of trimethylamine (TMA) to produce trimethylamine N-oxide (TMAO). In vitro, has a broad substrate specificity, oxidizing many nitrogen- and sulfur-containing compounds, including dimethylamine (DMA), dimethylsulfide (DMS) and dimethylsulfoxide (DMSO). In Pelagibacter ubique (strain HTCC1002), this protein is Trimethylamine monooxygenase.